We begin with the raw amino-acid sequence, 390 residues long: DNA polymerase IV (390 aa).

The UmuC domain occupies 6 to 187 (VMHVDLDAFF…LDIAVMPGIG (182 aa)). Mg(2+) contacts are provided by Asp10 and Asp105. Glu106 is a catalytic residue.

This sequence belongs to the DNA polymerase type-Y family. In terms of assembly, monomer. The cofactor is Mg(2+).

Its subcellular location is the cytoplasm. The enzyme catalyses DNA(n) + a 2'-deoxyribonucleoside 5'-triphosphate = DNA(n+1) + diphosphate. In terms of biological role, poorly processive, error-prone DNA polymerase involved in untargeted mutagenesis. Copies undamaged DNA at stalled replication forks, which arise in vivo from mismatched or misaligned primer ends. These misaligned primers can be extended by PolIV. Exhibits no 3'-5' exonuclease (proofreading) activity. May be involved in translesional synthesis, in conjunction with the beta clamp from PolIII. The sequence is that of DNA polymerase IV from Dehalococcoides mccartyi (strain CBDB1).